The chain runs to 50 residues: Small ribosomal subunit protein uS14 (50 aa).

Cys-15, Cys-18, Cys-33, and Cys-36 together coordinate Zn(2+).

The protein belongs to the universal ribosomal protein uS14 family. Zinc-binding uS14 subfamily. As to quaternary structure, part of the 30S ribosomal subunit. Requires Zn(2+) as cofactor.

Binds 16S rRNA, required for the assembly of 30S particles. This Methanosarcina mazei (strain ATCC BAA-159 / DSM 3647 / Goe1 / Go1 / JCM 11833 / OCM 88) (Methanosarcina frisia) protein is Small ribosomal subunit protein uS14.